The chain runs to 158 residues: Protein Smg homolog (158 aa).

It belongs to the Smg family.

This chain is Protein Smg homolog, found in Thioalkalivibrio sulfidiphilus (strain HL-EbGR7).